A 253-amino-acid polypeptide reads, in one-letter code: Sec-independent protein translocase protein TatC (253 aa).

The next 5 membrane-spanning stretches (helical) occupy residues 19–39 (ILII…LATP), 70–90 (FAFT…LWAF), 109–129 (IAFF…FPFL), 154–174 (FLFQ…VVMF), and 194–214 (FFVL…SHLM).

This sequence belongs to the TatC family. In terms of assembly, forms a complex with TatA.

The protein localises to the cell membrane. Functionally, part of the twin-arginine translocation (Tat) system that transports large folded proteins containing a characteristic twin-arginine motif in their signal peptide across membranes. This is Sec-independent protein translocase protein TatC from Halalkalibacterium halodurans (strain ATCC BAA-125 / DSM 18197 / FERM 7344 / JCM 9153 / C-125) (Bacillus halodurans).